A 366-amino-acid polypeptide reads, in one-letter code: MCRLSMPDAIVPFAKVSGLTSFAALAQVRRLLGVKKVGHTGTLDRFADGLLLLLVGGFTKLAPVMTRLEKSYEARIQFGVQTDTLDPEGAVVRCSLFPTFARVRAALPHFTGSIDQVPPEYSALKFGGVRASDRVRRGEAVCMKARRVFVFDLQVLGCEADLGEFKKTQAGRGAAIADLDLTRVRAVTLYVRCSAGFYVRALARDIAAACGSCAYVSHLRRTRIGPFDLAQAAGVSRLGSWTWGKERASCGAACFDVGAPPPPSSGGVATDSVSFGCEDLTVREIKQAVVSCDVDFANRIGLTACSVHAQYASRFLHGERIRACWFQSFGTRRPGERALVFSEGRCLGLIRKAANGFSYDAVFCTE.

Asp-44 (nucleophile) is an active-site residue.

This sequence belongs to the pseudouridine synthase TruB family. Type 1 subfamily.

The catalysed reaction is uridine(55) in tRNA = pseudouridine(55) in tRNA. Functionally, responsible for synthesis of pseudouridine from uracil-55 in the psi GC loop of transfer RNAs. The polypeptide is tRNA pseudouridine synthase B (Treponema pallidum (strain Nichols)).